The chain runs to 459 residues: MSGSDRGDRLYDVLGVTRDATVQEIKTAYRKLALKHHPDKYVDQDSKEVNEIKFKEITAAYEILSDPEKKSHYDLYGDDNGAASSGGANGFGDEDFMNFFNNFFNNGSHDGNNFPGEYDAYEEGNSTSSKDIDIDISLTLKDLYMGKKLKFDLKRQVICIKCHGSGWKPKRKIHVTHDVECESCAGKGSKERLKRFGPGLVASQWVVCEKCNGKGKYTKRPKNPKNFCPDCAGLGLLSKKEIITVNVAPGHHFNDVITVKGMADEEIDKTTCGDLKFHLTEKQENLEQKQIFLKNFDDGAGEDLYTSITISLSEALTGFEKFLTKTFDDRLLTLSVKPGRVVRPGDTIKIANEGWPILDNPHGRCGDLYVFVHIEFPPDNWFNEKSELLAIKTNLPSSSSCASHATVNTEDDSNLTNNETISNFRIIHTDDLPEGIRPFKPEAQDSAHQKARSSYCCIQ.

The J domain maps to 7 to 79 (GDRLYDVLGV…KSHYDLYGDD (73 aa)). The CR-type zinc finger occupies 146–240 (GKKLKFDLKR…CAGLGLLSKK (95 aa)). 4 CXXCXGXG motif repeats span residues 159–166 (CIKCHGSG), 181–188 (CESCAGKG), 208–215 (CEKCNGKG), and 228–235 (CPDCAGLG).

Its subcellular location is the mitochondrion outer membrane. The sequence is that of DnaJ protein homolog XDJ1 (XDJ1) from Saccharomyces cerevisiae (strain ATCC 204508 / S288c) (Baker's yeast).